Consider the following 354-residue polypeptide: 3-isopropylmalate dehydrogenase (354 aa).

Residue 76–87 (GPRWDSAKERPE) participates in NAD(+) binding. The substrate site is built by arginine 94, arginine 104, arginine 130, and aspartate 215. Mg(2+)-binding residues include aspartate 215, aspartate 239, and aspartate 243. Residue 273–285 (GSAPDIAGKNKAN) participates in NAD(+) binding.

It belongs to the isocitrate and isopropylmalate dehydrogenases family. LeuB type 1 subfamily. In terms of assembly, homodimer. Requires Mg(2+) as cofactor. Mn(2+) serves as cofactor.

Its subcellular location is the cytoplasm. The enzyme catalyses (2R,3S)-3-isopropylmalate + NAD(+) = 4-methyl-2-oxopentanoate + CO2 + NADH. Its pathway is amino-acid biosynthesis; L-leucine biosynthesis; L-leucine from 3-methyl-2-oxobutanoate: step 3/4. Catalyzes the oxidation of 3-carboxy-2-hydroxy-4-methylpentanoate (3-isopropylmalate) to 3-carboxy-4-methyl-2-oxopentanoate. The product decarboxylates to 4-methyl-2 oxopentanoate. In Bacillus cereus (strain ATCC 14579 / DSM 31 / CCUG 7414 / JCM 2152 / NBRC 15305 / NCIMB 9373 / NCTC 2599 / NRRL B-3711), this protein is 3-isopropylmalate dehydrogenase.